We begin with the raw amino-acid sequence, 568 residues long: DNA mismatch repair protein MutL (568 aa).

Belongs to the DNA mismatch repair MutL/HexB family.

Its function is as follows. This protein is involved in the repair of mismatches in DNA. It is required for dam-dependent methyl-directed DNA mismatch repair. May act as a 'molecular matchmaker', a protein that promotes the formation of a stable complex between two or more DNA-binding proteins in an ATP-dependent manner without itself being part of a final effector complex. This chain is DNA mismatch repair protein MutL, found in Thermosipho africanus (strain TCF52B).